A 231-amino-acid polypeptide reads, in one-letter code: Sec-independent protein translocase protein TatB (231 aa).

The helical transmembrane segment at 1 to 21 (MFDIGFSELLLFGVIALIVLG) threads the bilayer. The tract at residues 77–168 (MRREMAEMRG…SLKTDFNDNA (92 aa)) is disordered. The segment covering 101–111 (ASRDLVDDAKP) has biased composition (basic and acidic residues). Positions 148-157 (SEQPSAQGDN) are enriched in polar residues.

The protein belongs to the TatB family. The Tat system comprises two distinct complexes: a TatABC complex, containing multiple copies of TatA, TatB and TatC subunits, and a separate TatA complex, containing only TatA subunits. Substrates initially bind to the TatABC complex, which probably triggers association of the separate TatA complex to form the active translocon.

Its subcellular location is the cell inner membrane. Part of the twin-arginine translocation (Tat) system that transports large folded proteins containing a characteristic twin-arginine motif in their signal peptide across membranes. Together with TatC, TatB is part of a receptor directly interacting with Tat signal peptides. TatB may form an oligomeric binding site that transiently accommodates folded Tat precursor proteins before their translocation. In Psychrobacter cryohalolentis (strain ATCC BAA-1226 / DSM 17306 / VKM B-2378 / K5), this protein is Sec-independent protein translocase protein TatB.